Consider the following 566-residue polypeptide: Sister chromatid cohesion protein 1 (566 aa).

Position 161 is a phosphoserine (Ser-161). Position 175 is a phosphoserine; by CDC5 (Ser-175). The residue at position 210 (Lys-210) is an N6-acetyllysine; by ECO1. Ser-263 bears the Phosphoserine; by CDC5 mark. At Ser-307 the chain carries Phosphoserine. The tract at residues 325–356 (SIQIDEETENSESIASSNTYKEERSNNLLTPQ) is disordered. Thr-354 bears the Phosphothreonine mark.

It belongs to the rad21 family. In terms of assembly, interacts directly with IRR1/SCC3 in cohesin complex. Cohesin complexes are composed of the SMC1 and SMC3 heterodimer attached via their hinge domain, MCD1/SCC1 which link them, and IRR1, which interacts with MCD1. The cohesin complex also interacts with SCC2, which is required for its association with chromosomes. Post-translationally, cleaved by ESP1 at the onset of anaphase. In terms of processing, phosphorylated by CDC5/Polo-like kinase at the onset of anaphase. Phosphorylation takes places at proximity to cleavage sites and is required for an efficient cleavage by ESP1. Acetylated by ECO1.

Its subcellular location is the nucleus. It localises to the chromosome. The protein localises to the centromere. Cleavable component of the cohesin complex involved in chromosome cohesion during cell cycle. The cohesin complex is required for the cohesion of sister chromatids after DNA replication. The cohesin complex apparently forms a large proteinaceous ring within which sister chromatids can be trapped. At metaphase-anaphase transition, this protein is cleaved by ESP1 and dissociates from chromatin, allowing sister chromatids to segregate. This Saccharomyces cerevisiae (strain ATCC 204508 / S288c) (Baker's yeast) protein is Sister chromatid cohesion protein 1 (MCD1).